The following is a 239-amino-acid chain: Gamma-lactamase MBL2 (239 aa).

6 residues coordinate Zn(2+): His-56, His-58, Asp-60, His-61, His-141, and Asp-165.

It belongs to the metallo-beta-lactamase superfamily.

Its function is as follows. Gamma-lactamase; part of the Fusarium detoxification of benzoxazolinone cluster 2 (FDB2) involved in the degradation of benzoxazolinones produced by the host plant. Maize, wheat, and rye produce the 2 benzoxazinone phytoanticipins 2,4-dihy-droxy-7-methoxy-1,4-benzoxazin-3-one (DIMBOA) and 2,4-dihydroxy-1,4-benzoxazin-3-one (DIBOA) that, due to their inherent instability once released, spontaneously degrade to the more stable corresponding benzoxazolinones, 6-methoxy-2-benzoxazolinone (MBOA) and 2-benzoxazolinone (BOA), respectively. The first step in the detoxification of benzoxazolinones involves the hydrolysis of the cyclic ester bond of benzoxazolinones by the FDB1 cluster gamma-lactamase MBL1 to aminophenols. MBL1 is able to convert BOA into 2-aminophenol (2-AP), as well as MBOA into 5-methoxy-2-aminophenol (2-AMP). The FDB2 cluster N-malonyltransferase FDB2/NAT1 then metabolizes aminophenols via N-malonylation to non-toxic malonamic acids. FDB2/NAT1 converts 2-AP into N-(2-hydroxyphenyl) malonamic acid (HPMA) and 2-AMP into N-(2-hydroxy-4-methoxyphenyl) malonamic acid (HMPMA). The duplicated dienlactone hydrolases DLH1 and DLH2 may provide redundant function for hydrolyzing the lactone moiety in the BOA molecule. The roles of the amidases and other enzymes encoded by the 2 FDB clusters have not been identified so far. The protein is Gamma-lactamase MBL2 of Gibberella moniliformis (strain M3125 / FGSC 7600) (Maize ear and stalk rot fungus).